Consider the following 432-residue polypeptide: MRVVILGSGVVGVASAWYLNQAGHEVTVIDREPGAALETSAANAGQISPGYAAPWAAPGVPLKAIKWMFQRHAPLAVRLDGTQFQLKWMWQMLRNCDTSHYMENKGRMVRLAEYSRDCLKVLRAETNIQYEGRQGGTLQLFRTEQQYENATRDIAVLEDAGVPYQLLESSRLAEVEPALAEVAHKLTGGLQLPNDETGDCQLFTQNLARMAEQAGVKFHFNTPVDQLLCDGEQIYGVKCGDEVIKADAYVMAFGSYSTAMLKGIVDIPVYPLKGYSLTIPIAQEDGAPVSTILDETYKIAITRFDNRIRVGGMAEIVGFNTELLQPRRETLEMVVRDLYPRGGHVEQATFWTGLRPMTPDGTPVVGRTRFKNLWLNTGHGTLGWTMACGSSQLLSDLLSGRTPAIPYEDLSVARYSRGFTPSRPGHLHGAHS.

3–17 (VVILGSGVVGVASAW) contacts FAD.

Belongs to the DadA oxidoreductase family. FAD is required as a cofactor.

It catalyses the reaction a D-alpha-amino acid + A + H2O = a 2-oxocarboxylate + AH2 + NH4(+). The protein operates within amino-acid degradation; D-alanine degradation; NH(3) and pyruvate from D-alanine: step 1/1. Functionally, oxidative deamination of D-amino acids. The chain is D-amino acid dehydrogenase from Escherichia coli O127:H6 (strain E2348/69 / EPEC).